An 82-amino-acid chain; its full sequence is Small ribosomal subunit protein bS18 (82 aa).

The protein belongs to the bacterial ribosomal protein bS18 family. Part of the 30S ribosomal subunit. Forms a tight heterodimer with protein bS6.

Functionally, binds as a heterodimer with protein bS6 to the central domain of the 16S rRNA, where it helps stabilize the platform of the 30S subunit. This Bifidobacterium adolescentis (strain ATCC 15703 / DSM 20083 / NCTC 11814 / E194a) protein is Small ribosomal subunit protein bS18.